We begin with the raw amino-acid sequence, 419 residues long: Variant surface glycoprotein YnAT 1.1 (419 aa).

A signal peptide spans 1–28 (MKRVLSNVLKAWIFTIVAFHNFSTSVTA). 2 N-linked (GlcNAc...) asparagine glycosylation sites follow: Asn-82 and Asn-358. A disordered region spans residues 369–405 (ESSRPPSTDANTSQKGPLQRPEKSGESSHLPSGSSHG). Residues 372–384 (RPPSTDANTSQKG) are compositionally biased toward polar residues. The N-linked (GlcNAc...) (high mannose) asparagine glycan is linked to Asn-379. Low complexity predominate over residues 395–405 (SSHLPSGSSHG). Ser-400 carries GPI-anchor amidated serine lipidation. The propeptide at 401 to 419 (GSSHGTKAIRSILHVALLM) is removed in mature form.

It is found in the cell membrane. In terms of biological role, VSG forms a coat on the surface of the parasite. The trypanosome evades the immune response of the host by expressing a series of antigenically distinct VSGs from an estimated 1000 VSG genes. In Trypanosoma congolense, this protein is Variant surface glycoprotein YnAT 1.1.